The chain runs to 376 residues: Chaperone protein DnaJ (376 aa).

The region spanning 4–68 is the J domain; the sequence is DYYEILGVAR…ETRARYDRFG (65 aa). The segment at 102–121 is disordered; the sequence is GGMGGPTQQRRRGGPARGDD. A CR-type zinc finger spans residues 136–218; it reads GGEKEIRISH…CDGKGTNQVT (83 aa). The Zn(2+) site is built by cysteine 149, cysteine 152, cysteine 166, cysteine 169, cysteine 192, cysteine 195, cysteine 206, and cysteine 209. CXXCXGXG motif repeat units follow at residues 149–156, 166–173, 192–199, and 206–213; these read CETCSGSG, CSTCSGSG, CPTCNGTG, and CDACDGKG.

Belongs to the DnaJ family. As to quaternary structure, homodimer. Zn(2+) is required as a cofactor.

Its subcellular location is the cytoplasm. Functionally, participates actively in the response to hyperosmotic and heat shock by preventing the aggregation of stress-denatured proteins and by disaggregating proteins, also in an autonomous, DnaK-independent fashion. Unfolded proteins bind initially to DnaJ; upon interaction with the DnaJ-bound protein, DnaK hydrolyzes its bound ATP, resulting in the formation of a stable complex. GrpE releases ADP from DnaK; ATP binding to DnaK triggers the release of the substrate protein, thus completing the reaction cycle. Several rounds of ATP-dependent interactions between DnaJ, DnaK and GrpE are required for fully efficient folding. Also involved, together with DnaK and GrpE, in the DNA replication of plasmids through activation of initiation proteins. In Trichormus variabilis (strain ATCC 29413 / PCC 7937) (Anabaena variabilis), this protein is Chaperone protein DnaJ.